Here is a 398-residue protein sequence, read N- to C-terminus: Chalcone synthase 1 (398 aa).

58–65 contacts CoA; the sequence is KFKRMCDK. Catalysis depends on C167, which acts as the Acyl-thioester intermediate. Residues T200 and 219-220 each bind substrate; that span reads GD. Residue A311 participates in CoA binding.

It belongs to the thiolase-like superfamily. Chalcone/stilbene synthases family. In terms of assembly, homodimer.

The enzyme catalyses (E)-4-coumaroyl-CoA + 3 malonyl-CoA + 3 H(+) = 2',4,4',6'-tetrahydroxychalcone + 3 CO2 + 4 CoA. It functions in the pathway secondary metabolite biosynthesis; flavonoid biosynthesis. In terms of biological role, the primary product of this enzyme is 4,2',4',6'-tetrahydroxychalcone (also termed naringenin-chalcone or chalcone) which can under specific conditions spontaneously isomerize into naringenin. The polypeptide is Chalcone synthase 1 (CHS1) (Oryza sativa subsp. indica (Rice)).